Reading from the N-terminus, the 520-residue chain is D-aminopeptidase (520 aa).

S62 functions as the Nucleophile in the catalytic mechanism. Residue K65 is the Proton donor/acceptor of the active site. Positions 477-487 (QRSMDAPSPGE) are important for specificity. Residue D481 participates in substrate binding.

Belongs to the peptidase S12 family. In terms of assembly, homodimer.

It catalyses the reaction Release of an N-terminal D-amino acid from a peptide, Xaa-|-Yaa-, in which Xaa is preferably D-Ala, D-Ser or D-Thr. D-amino acid amides and methyl esters also are hydrolyzed, as is glycine amide.. With respect to regulation, inhibited by beta-lactam compounds such as 6-aminopenicillic acid, 7-aminocephalosporanic acid, benzylpenicillin and ampicillin. Inhibited by p-chloromercuribenzoate. Hydrolyzes N-terminal residues in D-amino acid-containing peptides. This Brucella anthropi (Ochrobactrum anthropi) protein is D-aminopeptidase (dap).